Reading from the N-terminus, the 109-residue chain is RNA-binding protein Hfq (109 aa).

One can recognise a Sm domain in the interval 9 to 68; that stretch reads DPFLNALRKEKVNVSVYLVNGIKLQGQVEAFDQFCIVLRNTVNQMVYKHAISTIVPAKSV. The segment at 77–109 is disordered; sequence PYHQNSNDEQDENVDDIHSDDLEIQENEGNIHE.

It belongs to the Hfq family. As to quaternary structure, homohexamer.

Its function is as follows. RNA chaperone that binds small regulatory RNA (sRNAs) and mRNAs to facilitate mRNA translational regulation in response to envelope stress, environmental stress and changes in metabolite concentrations. Also binds with high specificity to tRNAs. This is RNA-binding protein Hfq from Francisella tularensis subsp. mediasiatica (strain FSC147).